The following is a 302-amino-acid chain: ICOS ligand (302 aa).

Positions Met-1–Ala-18 are cleaved as a signal peptide. The 111-residue stretch at Asp-19–Glu-129 folds into the Ig-like V-type domain. Residues Asp-19 to Thr-256 lie on the Extracellular side of the membrane. Cys-37 and Cys-113 are disulfide-bonded. Asn-70, Asn-137, Asn-173, Asn-186, and Asn-225 each carry an N-linked (GlcNAc...) asparagine glycan. The Ig-like C2-type domain maps to Pro-141–Thr-227. An intrachain disulfide couples Cys-158 to Cys-216. Residues Trp-257–Cys-277 traverse the membrane as a helical segment. Topologically, residues Arg-278–Val-302 are cytoplasmic.

Belongs to the immunoglobulin superfamily. BTN/MOG family. Interacts with CTLA4 (in vitro). In terms of tissue distribution, expressed on peripheral blood B-cells and monocytes, as well as on monocyte-derived dendritic cells (at protein level). As to expression, widely expressed (brain, heart, kidney, liver, lung, pancreas, placenta, skeletal muscle, bone marrow, colon, ovary, prostate, testis, lymph nodes, leukocytes, spleen, thymus and tonsil). Detected only in lymph nodes, leukocytes and spleen. Expressed on activated monocytes and dendritic cells.

It localises to the cell membrane. Functionally, ligand for the T-cell-specific cell surface receptor ICOS. Acts as a costimulatory signal for T-cell proliferation and cytokine secretion. Also induces B-cell proliferation and differentiation into plasma cells. Could play an important role in mediating local tissue responses to inflammatory conditions, as well as in modulating the secondary immune response by co-stimulating memory T-cell function. In endothelial cells, required for proper neutrophil transmigration in response to chemoattractants, such as CXCL8/IL8 or N-formyl-methionyl peptides (fMLP). This Homo sapiens (Human) protein is ICOS ligand (ICOSLG).